The primary structure comprises 89 residues: Phytosulfokines 1 (89 aa).

The N-terminal stretch at 1-22 (MVNPGRTARALCLLCLALLLLG) is a signal peptide. Positions 23–79 (QDTHSRKLLLQEKHSHGVGNGTTTTQEPSRENGGSTGSNNNGQLQFDSAKWEEFHTD) are excised as a propeptide. Residues 33 to 70 (QEKHSHGVGNGTTTTQEPSRENGGSTGSNNNGQLQFDS) are disordered. A glycan (N-linked (GlcNAc...) asparagine) is linked at Asn42. 2 positions are modified to sulfotyrosine: Tyr80 and Tyr82. A propeptide spanning residues 85 to 89 (DVKKP) is cleaved from the precursor.

This sequence belongs to the phytosulfokine family. Post-translationally, sulfation is important for activity and for the binding to a putative membrane receptor. PSK-alpha is produced by endopeptidase digestion. PSK-beta is produced from PSK-alpha by exopeptidase digestion. Expressed throughout the seedling. More abundant in fragments containing shoot or root apexes where cells proliferate vigorously.

The protein resides in the secreted. Promotes plant cell differentiation, organogenesis and somatic embryogenesis as well as cell proliferation. The polypeptide is Phytosulfokines 1 (PSK1) (Oryza sativa subsp. japonica (Rice)).